Reading from the N-terminus, the 588-residue chain is Solute carrier family 2, facilitated glucose transporter member 12 (588 aa).

Residues 1-28 (MLAHSTAQDLILQQRSSDDHPQTNPRQT) lie on the Cytoplasmic side of the membrane. Residues 29-49 (GCGAFIILSSVIAAISGLLVG) traverse the membrane as a helical segment. Residues 50–74 (YELGIISGALLQLQSLLELTCQQQE) lie on the Extracellular side of the membrane. A helical transmembrane segment spans residues 75-95 (IVVSALLIGALVASLVGGCLI). Residues 96–103 (DLYGRRTT) lie on the Cytoplasmic side of the membrane. A helical membrane pass occupies residues 104-124 (IIFTSILLVFANLLPVVVVSY). The Extracellular segment spans residues 125-131 (GSLIAGR). Residues 132 to 152 (IFIGVSISLSAIATCVYIAEL) form a helical membrane-spanning segment. The Cytoplasmic portion of the chain corresponds to 153 to 158 (SPQDKR). Residues 159 to 179 (GMLVSLNELMIVAGILLAYIC) form a helical membrane-spanning segment. Residues 180–191 (NYLFASVNNGWK) are Extracellular-facing. Residues 192–212 (YMFGLITPLAALQAVAMFFLP) traverse the membrane as a helical segment. Residues 213–272 (RSPRFLIMKGYDDAAGKVLQKLRATTDINEELTAIKSSIKAEYQYKFLDLFCSRDNMRAR) lie on the Cytoplasmic side of the membrane. The chain crosses the membrane as a helical span at residues 273 to 293 (LLIGLTLSFFVQITGQPNILF). Topologically, residues 294–311 (YASTVLKSVGFQSTEAAS) are extracellular. Residues 312–332 (LASTGIGVVKVVSTIPAIFLV) form a helical membrane-spanning segment. The Cytoplasmic portion of the chain corresponds to 333 to 339 (DKIGSKT). A helical membrane pass occupies residues 340 to 360 (FLCIGSAVMAVSLVSVGLVSL). The Extracellular portion of the chain corresponds to 361–459 (QLDVNYNNIC…IPEYMKWLCL (99 aa)). Residues asparagine 377, asparagine 395, and asparagine 419 are each glycosylated (N-linked (GlcNAc...) asparagine). Residues 460–480 (SSLLAFVAAFSIGLGPMAWLV) form a helical membrane-spanning segment. Topologically, residues 481–492 (QSEIFPAGIKGR) are cytoplasmic. The chain crosses the membrane as a helical span at residues 493–513 (AFAITSSMNWGMNLLISLTFL). Over 514–522 (TLTEMIGLP) the chain is Extracellular. Residues 523-543 (WMLFGYALMSIASLVFVIMFV) form a helical membrane-spanning segment. Residues 544 to 588 (PNTKGRPLEEISKELANRSYMCNAVCHRRRSKKKLTPVALIQSPA) are Cytoplasmic-facing.

This sequence belongs to the major facilitator superfamily. Sugar transporter (TC 2.A.1.1) family. Glucose transporter subfamily.

It is found in the cell membrane. Its subcellular location is the endomembrane system. The protein localises to the cytoplasm. It localises to the perinuclear region. It catalyses the reaction D-glucose(out) = D-glucose(in). In terms of biological role, insulin-regulated facilitative glucose transporter. In Xenopus laevis (African clawed frog), this protein is Solute carrier family 2, facilitated glucose transporter member 12.